The chain runs to 25 residues: Androctonin (25 aa).

Disulfide bonds link C4–C20 and C10–C16.

It is found in the secreted. Functionally, active against both bacteria (Gram-positive and Gram-negative) and filamentous fungi. Acts on the membrane of the bacterial cells. It destabilize a membrane by modifying its properties. The chain is Androctonin from Androctonus australis (Sahara scorpion).